The chain runs to 427 residues: Adenylosuccinate synthetase (427 aa).

GTP is bound by residues 12-18 (GDEGKGK) and 40-42 (GHT). Residue Asp13 is the Proton acceptor of the active site. Mg(2+)-binding residues include Asp13 and Gly40. Residues 13 to 16 (DEGK), 38 to 41 (NAGH), Thr128, Arg142, Gln223, Thr238, and Arg302 contribute to the IMP site. The active-site Proton donor is His41. Residue 298-304 (TTTGRPR) participates in substrate binding. GTP is bound by residues Arg304, 330–332 (KLD), and 412–414 (AVG).

The protein belongs to the adenylosuccinate synthetase family. In terms of assembly, homodimer. It depends on Mg(2+) as a cofactor.

Its subcellular location is the cytoplasm. The enzyme catalyses IMP + L-aspartate + GTP = N(6)-(1,2-dicarboxyethyl)-AMP + GDP + phosphate + 2 H(+). Its pathway is purine metabolism; AMP biosynthesis via de novo pathway; AMP from IMP: step 1/2. Plays an important role in the de novo pathway of purine nucleotide biosynthesis. Catalyzes the first committed step in the biosynthesis of AMP from IMP. The polypeptide is Adenylosuccinate synthetase (Moorella thermoacetica (strain ATCC 39073 / JCM 9320)).